Consider the following 373-residue polypeptide: Probable tRNA sulfurtransferase (373 aa).

Residues 54 to 158 form the THUMP domain; the sequence is NKNIEELSKV…NDVAYFYYKI (105 aa). Residues 176–177, 201–202, lysine 256, glycine 278, and glutamine 287 contribute to the ATP site; these read LF and NF.

Belongs to the ThiI family.

It is found in the cytoplasm. It carries out the reaction [ThiI sulfur-carrier protein]-S-sulfanyl-L-cysteine + a uridine in tRNA + 2 reduced [2Fe-2S]-[ferredoxin] + ATP + H(+) = [ThiI sulfur-carrier protein]-L-cysteine + a 4-thiouridine in tRNA + 2 oxidized [2Fe-2S]-[ferredoxin] + AMP + diphosphate. The catalysed reaction is [ThiS sulfur-carrier protein]-C-terminal Gly-Gly-AMP + S-sulfanyl-L-cysteinyl-[cysteine desulfurase] + AH2 = [ThiS sulfur-carrier protein]-C-terminal-Gly-aminoethanethioate + L-cysteinyl-[cysteine desulfurase] + A + AMP + 2 H(+). The protein operates within cofactor biosynthesis; thiamine diphosphate biosynthesis. Functionally, catalyzes the ATP-dependent transfer of a sulfur to tRNA to produce 4-thiouridine in position 8 of tRNAs, which functions as a near-UV photosensor. Also catalyzes the transfer of sulfur to the sulfur carrier protein ThiS, forming ThiS-thiocarboxylate. This is a step in the synthesis of thiazole, in the thiamine biosynthesis pathway. The sulfur is donated as persulfide by IscS. In Saccharolobus islandicus (strain Y.N.15.51 / Yellowstone #2) (Sulfolobus islandicus), this protein is Probable tRNA sulfurtransferase.